Here is a 459-residue protein sequence, read N- to C-terminus: Bifunctional protein GlmU (459 aa).

Residues 1 to 229 (MSNYAIILAA…FDESLGVNDR (229 aa)) are pyrophosphorylase. UDP-N-acetyl-alpha-D-glucosamine contacts are provided by residues 8–11 (LAAG), Lys-22, Gln-72, and 77–78 (GT). Asp-102 contacts Mg(2+). UDP-N-acetyl-alpha-D-glucosamine-binding residues include Gly-139, Glu-154, Asn-169, and Asn-227. Asn-227 is a binding site for Mg(2+). The linker stretch occupies residues 230–250 (VALATAEKVMRHRIARQHMVN). Residues 251-459 (GVTVVNPDSA…NKKPHHPSQK (209 aa)) form an N-acetyltransferase region. UDP-N-acetyl-alpha-D-glucosamine is bound by residues Arg-332 and Lys-350. His-362 (proton acceptor) is an active-site residue. The UDP-N-acetyl-alpha-D-glucosamine site is built by Tyr-365 and Asn-376. Acetyl-CoA is bound by residues Ala-379, 385 to 386 (NY), Ser-404, Ala-422, and Arg-439.

It in the N-terminal section; belongs to the N-acetylglucosamine-1-phosphate uridyltransferase family. In the C-terminal section; belongs to the transferase hexapeptide repeat family. As to quaternary structure, homotrimer. Mg(2+) serves as cofactor.

Its subcellular location is the cytoplasm. The catalysed reaction is alpha-D-glucosamine 1-phosphate + acetyl-CoA = N-acetyl-alpha-D-glucosamine 1-phosphate + CoA + H(+). It catalyses the reaction N-acetyl-alpha-D-glucosamine 1-phosphate + UTP + H(+) = UDP-N-acetyl-alpha-D-glucosamine + diphosphate. It functions in the pathway nucleotide-sugar biosynthesis; UDP-N-acetyl-alpha-D-glucosamine biosynthesis; N-acetyl-alpha-D-glucosamine 1-phosphate from alpha-D-glucosamine 6-phosphate (route II): step 2/2. Its pathway is nucleotide-sugar biosynthesis; UDP-N-acetyl-alpha-D-glucosamine biosynthesis; UDP-N-acetyl-alpha-D-glucosamine from N-acetyl-alpha-D-glucosamine 1-phosphate: step 1/1. The protein operates within bacterial outer membrane biogenesis; LPS lipid A biosynthesis. Its function is as follows. Catalyzes the last two sequential reactions in the de novo biosynthetic pathway for UDP-N-acetylglucosamine (UDP-GlcNAc). The C-terminal domain catalyzes the transfer of acetyl group from acetyl coenzyme A to glucosamine-1-phosphate (GlcN-1-P) to produce N-acetylglucosamine-1-phosphate (GlcNAc-1-P), which is converted into UDP-GlcNAc by the transfer of uridine 5-monophosphate (from uridine 5-triphosphate), a reaction catalyzed by the N-terminal domain. The protein is Bifunctional protein GlmU of Streptococcus agalactiae serotype III (strain NEM316).